The chain runs to 167 residues: Bacterial non-heme ferritin-like protein (167 aa).

Positions 1–145 (MATAGMLLKL…TILDEVRSAK (145 aa)) constitute a Ferritin-like diiron domain.

It belongs to the ferritin family. Prokaryotic subfamily.

Its subcellular location is the cytoplasm. The polypeptide is Bacterial non-heme ferritin-like protein (ftnB) (Escherichia coli O157:H7).